We begin with the raw amino-acid sequence, 81 residues long: Acyl carrier protein 2 (81 aa).

The Carrier domain maps to methionine 1–leucine 79. Serine 39 is modified (O-(pantetheine 4'-phosphoryl)serine).

It belongs to the acyl carrier protein (ACP) family. 4'-phosphopantetheine is transferred from CoA to a specific serine of apo-ACP by AcpS. This modification is essential for activity because fatty acids are bound in thioester linkage to the sulfhydryl of the prosthetic group.

Its subcellular location is the cytoplasm. The protein operates within lipid metabolism; fatty acid biosynthesis. Its function is as follows. Carrier of the growing fatty acid chain in fatty acid biosynthesis. This Ralstonia nicotianae (strain ATCC BAA-1114 / GMI1000) (Ralstonia solanacearum) protein is Acyl carrier protein 2.